We begin with the raw amino-acid sequence, 248 residues long: Pulmonary surfactant-associated protein A2 (248 aa).

The signal sequence occupies residues 1-20; sequence MWLCPLALTLILMAASGAAC. In terms of domain architecture, Collagen-like spans 28-100; the sequence is GSPGIPGTPG…AGERGPPGLP (73 aa). 9 positions are modified to 4-hydroxyproline: Pro30, Pro33, Pro36, Pro42, Pro54, Pro57, Pro63, Pro67, and Pro70. A disordered region spans residues 33–101; it reads PGTPGSHGLP…GERGPPGLPA (69 aa). Over residues 42–51 the composition is skewed to basic and acidic residues; sequence PGRDGRDGVK. Positions 54 to 70 are enriched in pro residues; it reads PGPPGPMGPPGETPCPP. Over residues 71-82 the composition is skewed to low complexity; sequence GNNGLPGAPGVP. Residues 84-93 show a composition bias toward basic and acidic residues; the sequence is ERGEKGEAGE. One can recognise a C-type lectin domain in the interval 132–248; it reads MTVGEKVFSS…LYSRLTICEF (117 aa). Cystine bridges form between Cys155–Cys246 and Cys224–Cys238. A glycan (N-linked (GlcNAc...) asparagine) is linked at Asn207.

The protein belongs to the SFTPA family. Oligomeric complex of 6 set of homotrimers. N-acetylated.

It is found in the secreted. The protein resides in the extracellular space. Its subcellular location is the extracellular matrix. It localises to the surface film. In terms of biological role, in presence of calcium ions, it binds to surfactant phospholipids and contributes to lower the surface tension at the air-liquid interface in the alveoli of the mammalian lung and is essential for normal respiration. The sequence is that of Pulmonary surfactant-associated protein A2 (SFTPA2) from Homo sapiens (Human).